The chain runs to 223 residues: Small ribosomal subunit protein uS3 (223 aa).

The KH type-2 domain maps to 39 to 115; that stretch reads IRKYIEKNLA…RVFINIVEIK (77 aa).

The protein belongs to the universal ribosomal protein uS3 family. As to quaternary structure, part of the 30S ribosomal subunit. Forms a tight complex with proteins S10 and S14.

In terms of biological role, binds the lower part of the 30S subunit head. Binds mRNA in the 70S ribosome, positioning it for translation. The protein is Small ribosomal subunit protein uS3 of Leuconostoc citreum (strain KM20).